The sequence spans 188 residues: Putative manganese efflux pump MntP (188 aa).

6 helical membrane passes run 3 to 23 (LFSL…VSIC), 39 to 59 (AGLY…LLGV), 65 to 85 (ITDY…VNML), 110 to 130 (LGFA…FLSV), 131 to 151 (DIYS…IIGV), and 167 to 187 (ILGG…HTLF).

The protein belongs to the MntP (TC 9.B.29) family.

The protein resides in the cell inner membrane. Probably functions as a manganese efflux pump. The polypeptide is Putative manganese efflux pump MntP (Mannheimia succiniciproducens (strain KCTC 0769BP / MBEL55E)).